Reading from the N-terminus, the 215-residue chain is MSKVYDWFEERLEIQAIADDITSKYVPPHVNIFYCLGGITLTCFLVQVATGFAMTFYYRPTVTEAFASVQYIMTEANFGWLIRSVHRWSASMMVLMMILHVFRVYLTGGFKKPRELTWVTGVVLAVLTASFGVTGYSLPWDQVGYWAVKIVTGVPDAIPVIGSPLVELLRGSASVGQSTLTRFYSLHTFVLPLLTAVFMLMHFLMIRKQGISGPL.

The helical transmembrane segment at 32-52 (IFYCLGGITLTCFLVQVATGF) threads the bilayer. Position 35 (C35) interacts with heme c. Heme b contacts are provided by H86 and H100. The next 3 membrane-spanning stretches (helical) occupy residues 90 to 110 (ASMMVLMMILHVFRVYLTGGF), 116 to 136 (LTWVTGVVLAVLTASFGVTGY), and 186 to 206 (LHTFVLPLLTAVFMLMHFLMI). Heme b contacts are provided by H187 and H202.

This sequence belongs to the cytochrome b family. PetB subfamily. In terms of assembly, the 4 large subunits of the cytochrome b6-f complex are cytochrome b6, subunit IV (17 kDa polypeptide, PetD), cytochrome f and the Rieske protein, while the 4 small subunits are PetG, PetL, PetM and PetN. The complex functions as a dimer. Heme b serves as cofactor. Heme c is required as a cofactor.

Its subcellular location is the plastid. The protein localises to the chloroplast thylakoid membrane. Functionally, component of the cytochrome b6-f complex, which mediates electron transfer between photosystem II (PSII) and photosystem I (PSI), cyclic electron flow around PSI, and state transitions. This chain is Cytochrome b6, found in Nicotiana tabacum (Common tobacco).